The following is a 226-amino-acid chain: Putative type II restriction enzyme MjaVIP (226 aa).

The protein belongs to the BsaWI type II restriction endonuclease family.

It catalyses the reaction Endonucleolytic cleavage of DNA to give specific double-stranded fragments with terminal 5'-phosphates.. A P subtype restriction enzyme that recognizes the double-stranded sequence 5'-CCGG-3'; the cleavage site is unknown. This Methanocaldococcus jannaschii (strain ATCC 43067 / DSM 2661 / JAL-1 / JCM 10045 / NBRC 100440) (Methanococcus jannaschii) protein is Putative type II restriction enzyme MjaVIP (mjaVIRP).